The chain runs to 231 residues: tRNA (guanine-N(1)-)-methyltransferase (231 aa).

Residues Gly-114 and 134 to 139 (IGDYVL) contribute to the S-adenosyl-L-methionine site.

It belongs to the RNA methyltransferase TrmD family. Homodimer.

It localises to the cytoplasm. The catalysed reaction is guanosine(37) in tRNA + S-adenosyl-L-methionine = N(1)-methylguanosine(37) in tRNA + S-adenosyl-L-homocysteine + H(+). In terms of biological role, specifically methylates guanosine-37 in various tRNAs. This is tRNA (guanine-N(1)-)-methyltransferase from Clostridioides difficile (strain 630) (Peptoclostridium difficile).